Reading from the N-terminus, the 1240-residue chain is Structural polyprotein (1240 aa).

The tract at residues 1 to 35 is necessary for nucleocapsid assembly and virus assembly; sequence MFPYPTLNYPPMAPINPMAYRDPNPPRQVAPFRPP. A disordered region spans residues 1–102; that stretch reads MFPYPTLNYP…RKPKPGKRQR (102 aa). Residues 23 to 34 show a composition bias toward pro residues; it reads PNPPRQVAPFRP. The host transcription inhibition stretch occupies residues 36 to 69; it reads LAAQIEDLRRSIANLTLKQRAPNPPAGPPAKRKK. The Supraphysiological nuclear export signal motif lies at 43 to 50; sequence LRRSIANL. Asn-49 is a glycosylation site (N-linked (GlcNAc...) asparagine; by host). Over residues 65–102 the composition is skewed to basic residues; the sequence is AKRKKPAPKPKPAQAKKKRPPPPAKKQKRKPKPGKRQR. The Nuclear localization signal signature appears at 66–70; the sequence is KRKKP. Residues 82–112 are binding to the viral RNA; the sequence is KRPPPPAKKQKRKPKPGKRQRMCMKLESDKT. The tract at residues 97 to 111 is ribosome-binding; sequence PGKRQRMCMKLESDK. The residue at position 109 (Ser-109) is a Phosphoserine. One can recognise a Peptidase S3 domain in the interval 111-260; it reads KTFPIMLNGQ…KDTPEGSEPW (150 aa). The residue at position 112 (Thr-112) is a Phosphothreonine. Catalysis depends on charge relay system residues His-137, Asp-159, and Ser-211. Positions 261-272 are functions as an uncleaved signal peptide for the precursor of protein E3/E2; sequence SLATVMCVLANI. Residues 261 to 682 are Extracellular-facing; the sequence is SLATVMCVLA…HEVVVYYYNR (422 aa). Asn-271 and Asn-638 each carry an N-linked (GlcNAc...) asparagine; by host glycan. A helical transmembrane segment spans residues 683-703; sequence YPLTTIIGLCTCVAIIMVSCV. At 704 to 743 the chain is on the cytoplasmic side; sequence HPCGSFAGLRNLCITPYKLAPNAQVPILLALLCCIKPTRA. 4 S-palmitoyl cysteine; by host lipidation sites follow: Cys-706, Cys-716, Cys-736, and Cys-737. The interval 715-735 is transient transmembrane before p62-6K protein processing; it reads LCITPYKLAPNAQVPILLALL. Residues 744 to 758 are Extracellular-facing; the sequence is DDTLQVLNYLWNNNQ. A helical transmembrane segment spans residues 759 to 779; sequence NFFWMQTLIPLAALIVCMRIV. Residue Arg-780 is a topological domain, cytoplasmic. Residues 781-801 traverse the membrane as a helical segment; it reads CLFCCGPAFLLVCGAWAAAYE. Over 802-1216 the chain is Extracellular; sequence HTAVMPNKVG…WSWLKVLVGG (415 aa). Asn-834 carries N-linked (GlcNAc...) asparagine; by host glycosylation. 4 disulfide bridges follow: Cys-848–Cys-913, Cys-861–Cys-893, Cys-862–Cys-895, and Cys-867–Cys-877. The E1 fusion peptide loop stretch occupies residues 883-900; it reads VYPFMWGGAYCFCDTENT. Asn-933 carries an N-linked (GlcNAc...) asparagine; by host glycan. 3 disulfides stabilise this stretch: Cys-1059-Cys-1071, Cys-1101-Cys-1176, and Cys-1106-Cys-1180. Residues 1217-1237 form a helical membrane-spanning segment; it reads TSAFIVLGLIATAVVALVLFF. The Cytoplasmic portion of the chain corresponds to 1238 to 1240; sequence HRH.

Part of a tetrameric complex composed of host CRM1, host importin alpha/beta dimer and the viral capsid; this complex blocks the receptor-mediated transport through the nuclear pore. Interacts with host phosphatase PPP1CA; this interaction dephosphorylates the capsid protein, which increases its ability to bind to the viral genome. Interacts with host karyopherin KPNA4; this interaction allows the nuclear import of the viral capsid protein. Interacts with spike glycoprotein E2. Interacts with host IRAK1; the interaction leads to inhibition of IRAK1-dependent signaling. As to quaternary structure, the precursor of protein E3/E2 and E1 form a heterodimer shortly after synthesis. In terms of assembly, the precursor of protein E3/E2 and E1 form a heterodimer shortly after synthesis. Processing of the precursor of protein E3/E2 into E2 and E3 results in a heterodimer of the spike glycoproteins E2 and E1. Spike at virion surface are constituted of three E2-E1 heterodimers. After target cell attachment and endocytosis, E1 change conformation to form homotrimers. Interacts with 6K protein. Processing of the precursor of protein E3/E2 into E2 and E3 results in a heterodimer of the spike glycoproteins E2 and E1. Spike at virion surface are constituted of three E2-E1 heterodimers. Interacts with 6K protein. As to quaternary structure, interacts with spike glycoprotein E1. Interacts with spike glycoprotein E2. Post-translationally, structural polyprotein: Specific enzymatic cleavages in vivo yield mature proteins. Capsid protein is auto-cleaved during polyprotein translation, unmasking a signal peptide at the N-terminus of the precursor of E3/E2. The remaining polyprotein is then targeted to the host endoplasmic reticulum, where host signal peptidase cleaves it into pE2, 6K and E1 proteins. pE2 is further processed to mature E3 and E2 by host furin in trans-Golgi vesicle. In terms of processing, phosphorylated on serine and threonine residues. Palmitoylated via thioester bonds. These palmitoylations may induce disruption of the C-terminus transmembrane. This would result in the reorientation of E2 C-terminus from lumenal to cytoplasmic side. Post-translationally, N-glycosylated. In terms of processing, palmitoylated via thioester bonds.

The protein localises to the virion. The protein resides in the host cytoplasm. Its subcellular location is the host cell membrane. It is found in the host nucleus. It localises to the virion membrane. The enzyme catalyses Autocatalytic release of the core protein from the N-terminus of the togavirus structural polyprotein by hydrolysis of a -Trp-|-Ser- bond.. Functionally, forms an icosahedral capsid with a T=4 symmetry composed of 240 copies of the capsid protein surrounded by a lipid membrane through which penetrate 80 spikes composed of trimers of E1-E2 heterodimers. The capsid protein binds to the viral RNA genome at a site adjacent to a ribosome binding site for viral genome translation following genome release. Possesses a protease activity that results in its autocatalytic cleavage from the nascent structural protein. Following its self-cleavage, the capsid protein transiently associates with ribosomes, and within several minutes the protein binds to viral RNA and rapidly assembles into icosahedric core particles. The resulting nucleocapsid eventually associates with the cytoplasmic domain of the spike glycoprotein E2 at the cell membrane, leading to budding and formation of mature virions. In case of infection, new virions attach to target cells and after clathrin-mediated endocytosis their membrane fuses with the host endosomal membrane. This leads to the release of the nucleocapsid into the cytoplasm, followed by an uncoating event necessary for the genomic RNA to become accessible. The uncoating might be triggered by the interaction of capsid proteins with ribosomes. Binding of ribosomes would release the genomic RNA since the same region is genomic RNA-binding and ribosome-binding. Specifically inhibits interleukin-1 receptor-associated kinase 1/IRAK1-dependent signaling during viral entry, representing a means by which the alphaviruses may evade innate immune detection and activation prior to viral gene expression. Inhibits host transcription. Forms a tetrameric complex with XPO1/CRM1 and the nuclear import receptor importin. This complex blocks the central channel of host nuclear pores thereby inhibiting the receptor-mediated nuclear transport and thus the host mRNA and rRNA transcription. The inhibition of transcription is linked to a cytopathic effect on the host cell. Provides the signal sequence for the translocation of the precursor of protein E3/E2 to the host endoplasmic reticulum. Furin-cleaved E3 remains associated with spike glycoprotein E1 and mediates pH protection of the latter during the transport via the secretory pathway. After virion release from the host cell, the assembly protein E3 is gradually released in the extracellular space. In terms of biological role, plays a role in viral attachment to target host cell, by binding to the cell receptor. Synthesized as a p62 precursor which is processed by furin at the cell membrane just before virion budding, giving rise to E2-E1 heterodimer. The p62-E1 heterodimer is stable, whereas E2-E1 is unstable and dissociate at low pH. p62 is processed at the last step, presumably to avoid E1 fusion activation before its final export to cell surface. E2 C-terminus contains a transitory transmembrane that would be disrupted by palmitoylation, resulting in reorientation of the C-terminal tail from lumenal to cytoplasmic side. This step is critical since E2 C-terminus is involved in budding by interacting with capsid proteins. This release of E2 C-terminus in cytoplasm occurs lately in protein export, and precludes premature assembly of particles at the endoplasmic reticulum membrane. Its function is as follows. Constitutive membrane protein involved in virus glycoprotein processing, cell permeabilization, and the budding of viral particles. Disrupts the calcium homeostasis of the cell, probably at the endoplasmic reticulum level. This leads to cytoplasmic calcium elevation. Because of its lipophilic properties, the 6K protein is postulated to influence the selection of lipids that interact with the transmembrane domains of the glycoproteins, which, in turn, affects the deformability of the bilayer required for the extreme curvature that occurs as budding proceeds. Present in low amount in virions, about 3% compared to viral glycoproteins. Functionally, class II viral fusion protein. Fusion activity is inactive as long as E1 is bound to E2 in mature virion. After virus attachment to target cell and endocytosis, acidification of the endosome would induce dissociation of E1/E2 heterodimer and concomitant trimerization of the E1 subunits. This E1 trimer is fusion active, and promotes release of viral nucleocapsid in cytoplasm after endosome and viral membrane fusion. Efficient fusion requires the presence of cholesterol and sphingolipid in the target membrane. Fusion is optimal at levels of about 1 molecule of cholesterol per 2 molecules of phospholipids, and is specific for sterols containing a 3-beta-hydroxyl group. This is Structural polyprotein from Eastern equine encephalitis virus (strain va33[ten broeck]) (EEEV).